The primary structure comprises 216 residues: MSCLPALDKFLQNYHQAYLTSLGELPRYYPQGEPSVCIQGEFHADLDQAVSWQPVKREVEGSFANVEHALELTLWPEINHFYGQYFSAPLLFDSKWGTGELLQVWNEDDFTCLQQNLIGHLMMKKKLKQPPTWFIGLLDEGDKMLTINNSDGSVWIELPGEIPTQQLSPSLAEFIGALSPRIAPPVKHEELPMPALEHPGIFASFKRMWQNLFGKR.

The protein belongs to the Syd family.

It is found in the cell inner membrane. In terms of biological role, interacts with the SecY protein in vivo. May bind preferentially to an uncomplexed state of SecY, thus functioning either as a chelating agent for excess SecY in the cell or as a regulatory factor that negatively controls the translocase function. The sequence is that of Protein Syd from Shewanella baltica (strain OS195).